The chain runs to 21 residues: Cold shock protein CspSt (21 aa).

The region spanning 1–21 (KNGTVKWFNAEKGFGFITSED) is the CSD domain.

It localises to the cytoplasm. The polypeptide is Cold shock protein CspSt (Streptococcus thermophilus).